We begin with the raw amino-acid sequence, 348 residues long: Phosphate acyltransferase (348 aa).

This sequence belongs to the PlsX family. Homodimer. Probably interacts with PlsY.

Its subcellular location is the cytoplasm. The catalysed reaction is a fatty acyl-[ACP] + phosphate = an acyl phosphate + holo-[ACP]. Its pathway is lipid metabolism; phospholipid metabolism. Its function is as follows. Catalyzes the reversible formation of acyl-phosphate (acyl-PO(4)) from acyl-[acyl-carrier-protein] (acyl-ACP). This enzyme utilizes acyl-ACP as fatty acyl donor, but not acyl-CoA. The sequence is that of Phosphate acyltransferase from Francisella tularensis subsp. tularensis (strain FSC 198).